The primary structure comprises 287 residues: Diaminopimelate epimerase (287 aa).

Residues N11, Q44, and N64 each coordinate substrate. Residue C73 is the Proton donor of the active site. Residues 74-75, N157, N190, and 208-209 contribute to the substrate site; these read GN and ER. Catalysis depends on C217, which acts as the Proton acceptor. Residue 218-219 coordinates substrate; it reads GT.

It belongs to the diaminopimelate epimerase family. As to quaternary structure, homodimer.

The protein localises to the cytoplasm. It carries out the reaction (2S,6S)-2,6-diaminopimelate = meso-2,6-diaminopimelate. The protein operates within amino-acid biosynthesis; L-lysine biosynthesis via DAP pathway; DL-2,6-diaminopimelate from LL-2,6-diaminopimelate: step 1/1. Functionally, catalyzes the stereoinversion of LL-2,6-diaminopimelate (L,L-DAP) to meso-diaminopimelate (meso-DAP), a precursor of L-lysine and an essential component of the bacterial peptidoglycan. The polypeptide is Diaminopimelate epimerase (Halorhodospira halophila (strain DSM 244 / SL1) (Ectothiorhodospira halophila (strain DSM 244 / SL1))).